Here is a 61-residue protein sequence, read N- to C-terminus: Large ribosomal subunit protein uL30 (61 aa).

The protein belongs to the universal ribosomal protein uL30 family. Part of the 50S ribosomal subunit.

The polypeptide is Large ribosomal subunit protein uL30 (Chlorobaculum parvum (strain DSM 263 / NCIMB 8327) (Chlorobium vibrioforme subsp. thiosulfatophilum)).